Here is a 323-residue protein sequence, read N- to C-terminus: ATP synthase gamma chain (323 aa).

It belongs to the ATPase gamma chain family. In terms of assembly, F-type ATPases have 2 components, CF(1) - the catalytic core - and CF(0) - the membrane proton channel. CF(1) has five subunits: alpha(3), beta(3), gamma(1), delta(1), epsilon(1). CF(0) has three main subunits: a, b and c.

The protein localises to the cell inner membrane. Functionally, produces ATP from ADP in the presence of a proton gradient across the membrane. The gamma chain is believed to be important in regulating ATPase activity and the flow of protons through the CF(0) complex. In Rickettsia africae (strain ESF-5), this protein is ATP synthase gamma chain.